Here is a 248-residue protein sequence, read N- to C-terminus: 4-hydroxy-tetrahydrodipicolinate reductase (248 aa).

NAD(+)-binding positions include 9 to 14 (GAKGRV), 77 to 79 (GTT), and 104 to 107 (APNF). Residue His134 is the Proton donor/acceptor of the active site. A (S)-2,3,4,5-tetrahydrodipicolinate-binding site is contributed by His135. Lys138 functions as the Proton donor in the catalytic mechanism. 144-145 (GT) contributes to the (S)-2,3,4,5-tetrahydrodipicolinate binding site.

It belongs to the DapB family.

It is found in the cytoplasm. The catalysed reaction is (S)-2,3,4,5-tetrahydrodipicolinate + NAD(+) + H2O = (2S,4S)-4-hydroxy-2,3,4,5-tetrahydrodipicolinate + NADH + H(+). The enzyme catalyses (S)-2,3,4,5-tetrahydrodipicolinate + NADP(+) + H2O = (2S,4S)-4-hydroxy-2,3,4,5-tetrahydrodipicolinate + NADPH + H(+). It participates in amino-acid biosynthesis; L-lysine biosynthesis via DAP pathway; (S)-tetrahydrodipicolinate from L-aspartate: step 4/4. Functionally, catalyzes the conversion of 4-hydroxy-tetrahydrodipicolinate (HTPA) to tetrahydrodipicolinate. The protein is 4-hydroxy-tetrahydrodipicolinate reductase of Corynebacterium aurimucosum (strain ATCC 700975 / DSM 44827 / CIP 107346 / CN-1) (Corynebacterium nigricans).